The sequence spans 297 residues: MAKQLRGVMAALLTPFNTQQALDKESLRRLVQFNMQQGIDGLYVGGSTGEAFVQSLSEREQVLEIVAEEAKGKITLIAHVGCVSTAESQQLAASASRFGFDAVSAVTPFYYPFSFEEHCDHYRAIIDSADGLPMVVYNIPALSGVKLTLDQINTLVTLPGVGALKQTSGDLFQMEQIRRAHPDLVLYNGYDEIFASGLLAGADGGIGSTYNIMGWRYQAIAKAIREGDNATAQRLQSECNKVIDLLIKVGVFRGLKTVLHYMDVVSVPLCRKPFAPVAEPYLPELKALAKQLMVEKA.

2 residues coordinate aceneuramate: serine 47 and threonine 48. The Proton donor role is filled by tyrosine 137. The active-site Schiff-base intermediate with substrate is lysine 165. Aceneuramate contacts are provided by threonine 167, glycine 189, aspartate 191, glutamate 192, and serine 208.

The protein belongs to the DapA family. NanA subfamily. Homotetramer.

The protein localises to the cytoplasm. The enzyme catalyses aceneuramate = aldehydo-N-acetyl-D-mannosamine + pyruvate. It functions in the pathway amino-sugar metabolism; N-acetylneuraminate degradation; D-fructose 6-phosphate from N-acetylneuraminate: step 1/5. In terms of biological role, catalyzes the reversible aldol cleavage of N-acetylneuraminic acid (sialic acid; Neu5Ac) to form pyruvate and N-acetylmannosamine (ManNAc) via a Schiff base intermediate. This chain is N-acetylneuraminate lyase, found in Enterobacter sp. (strain 638).